The chain runs to 343 residues: Cytoplasmic tRNA 2-thiolation protein 1 (343 aa).

Belongs to the TtcA family. CTU1/NCS6/ATPBD3 subfamily.

Its subcellular location is the cytoplasm. It participates in tRNA modification; 5-methoxycarbonylmethyl-2-thiouridine-tRNA biosynthesis. Its function is as follows. Plays a central role in 2-thiolation of mcm(5)S(2)U at tRNA wobble positions of tRNA(Lys), tRNA(Glu) and tRNA(Gln). Directly binds tRNAs and probably acts by catalyzing adenylation of tRNAs, an intermediate required for 2-thiolation. It is unclear whether it acts as a sulfurtransferase that transfers sulfur from thiocarboxylated URM1 onto the uridine of tRNAs at wobble position. The polypeptide is Cytoplasmic tRNA 2-thiolation protein 1 (Drosophila virilis (Fruit fly)).